A 144-amino-acid polypeptide reads, in one-letter code: Large ribosomal subunit protein uL13 (144 aa).

It belongs to the universal ribosomal protein uL13 family. Part of the 50S ribosomal subunit.

This protein is one of the early assembly proteins of the 50S ribosomal subunit, although it is not seen to bind rRNA by itself. It is important during the early stages of 50S assembly. This chain is Large ribosomal subunit protein uL13, found in Nitrosomonas eutropha (strain DSM 101675 / C91 / Nm57).